A 341-amino-acid chain; its full sequence is Guanine nucleotide-binding protein subunit beta (341 aa).

7 WD repeats span residues 54–84 (GHLA…IVWD), 96–126 (LRSS…SIYS), 142–171 (GHTG…ALWN), 183–213 (GHTG…KLFD), 225–255 (GHES…RLFD), 269–299 (NIIC…NVWD), and 311–341 (GHDN…KIWN).

The protein belongs to the WD repeat G protein beta family. As to quaternary structure, g proteins are composed of 3 units, alpha, beta and gamma.

In terms of biological role, guanine nucleotide-binding proteins (G proteins) are involved as a modulator or transducer in various transmembrane signaling systems. The beta and gamma chains are required for the GTPase activity, for replacement of GDP by GTP, and for G protein-effector interaction. This is Guanine nucleotide-binding protein subunit beta from Loligo forbesii (Veined squid).